Reading from the N-terminus, the 388-residue chain is MNLHEYQAKQLFAEFGLPVPEGYACDTPQEAFEAAGRISTAKKVVKCQVHAGGRGKAGGVELHDTKEGVKEFAQKWLGKNLVTFQTDANGQPVSKILVEEASNIANELYLGAVVDRASQRIVFMASTEGGVDIEKIAEETPELIHKAAIDPLVGPQAYQGRELAFKLGLEGDQIKQFVKIFMGLGNMFAQYDLALLEINPLVVTAEGSLLCLDGKINIDSNAMYRQPKLREMHDPSQEDEREAHAAQWELNYVALDGSIGCMVNGAGLAMGTMDIVNLHGGQPANFLDVGGGATKERVTEAFKIILSDSNVKAVLVNIFGGIVRCDLIADGIIGAVEEVGVEVPVVVRLEGNNAPLGSQKLAESGLNIIAATSLTEAAEKVVAAAEGK.

One can recognise an ATP-grasp domain in the interval 9–244 (KQLFAEFGLP…PSQEDEREAH (236 aa)). ATP contacts are provided by residues K46, 53–55 (GRG), E99, S102, and E107. The Mg(2+) site is built by N199 and D213. Substrate contacts are provided by residues N264 and 321–323 (GIV).

It belongs to the succinate/malate CoA ligase beta subunit family. As to quaternary structure, heterotetramer of two alpha and two beta subunits. The cofactor is Mg(2+).

The catalysed reaction is succinate + ATP + CoA = succinyl-CoA + ADP + phosphate. It carries out the reaction GTP + succinate + CoA = succinyl-CoA + GDP + phosphate. It functions in the pathway carbohydrate metabolism; tricarboxylic acid cycle; succinate from succinyl-CoA (ligase route): step 1/1. Succinyl-CoA synthetase functions in the citric acid cycle (TCA), coupling the hydrolysis of succinyl-CoA to the synthesis of either ATP or GTP and thus represents the only step of substrate-level phosphorylation in the TCA. The beta subunit provides nucleotide specificity of the enzyme and binds the substrate succinate, while the binding sites for coenzyme A and phosphate are found in the alpha subunit. The polypeptide is Succinate--CoA ligase [ADP-forming] subunit beta (Aliivibrio fischeri (strain ATCC 700601 / ES114) (Vibrio fischeri)).